The chain runs to 179 residues: Small ribosomal subunit protein uS7 (179 aa).

It belongs to the universal ribosomal protein uS7 family. In terms of assembly, part of the 30S ribosomal subunit. Contacts proteins S9 and S11. Cross-links to IF3 and the P and E site tRNAs.

Functionally, one of the primary rRNA binding proteins, it binds directly to 16S rRNA where it nucleates assembly of the head domain of the 30S subunit. Is located at the subunit interface close to the decoding center, where it has been shown to contact mRNA. Has been shown to contact tRNA in both the P and E sites; it probably blocks exit of the E site tRNA. In terms of biological role, protein S7 is also a translational repressor protein; it regulates the expression of the str operon members to different degrees by binding to its mRNA. The chain is Small ribosomal subunit protein uS7 (rpsG) from Escherichia coli (strain K12).